The sequence spans 172 residues: Adenine phosphoribosyltransferase (172 aa).

Belongs to the purine/pyrimidine phosphoribosyltransferase family. In terms of assembly, homodimer.

Its subcellular location is the cytoplasm. The catalysed reaction is AMP + diphosphate = 5-phospho-alpha-D-ribose 1-diphosphate + adenine. It participates in purine metabolism; AMP biosynthesis via salvage pathway; AMP from adenine: step 1/1. In terms of biological role, catalyzes a salvage reaction resulting in the formation of AMP, that is energically less costly than de novo synthesis. This is Adenine phosphoribosyltransferase from Staphylococcus epidermidis (strain ATCC 35984 / DSM 28319 / BCRC 17069 / CCUG 31568 / BM 3577 / RP62A).